The following is a 194-amino-acid chain: Peptidyl-tRNA hydrolase (194 aa).

Tyr17 lines the tRNA pocket. His22 serves as the catalytic Proton acceptor. Residues Tyr68, Asn70, and Asn116 each contribute to the tRNA site.

This sequence belongs to the PTH family. As to quaternary structure, monomer.

The protein resides in the cytoplasm. The catalysed reaction is an N-acyl-L-alpha-aminoacyl-tRNA + H2O = an N-acyl-L-amino acid + a tRNA + H(+). Hydrolyzes ribosome-free peptidyl-tRNAs (with 1 or more amino acids incorporated), which drop off the ribosome during protein synthesis, or as a result of ribosome stalling. In terms of biological role, catalyzes the release of premature peptidyl moieties from peptidyl-tRNA molecules trapped in stalled 50S ribosomal subunits, and thus maintains levels of free tRNAs and 50S ribosomes. The sequence is that of Peptidyl-tRNA hydrolase from Pseudoalteromonas translucida (strain TAC 125).